Reading from the N-terminus, the 382-residue chain is UDP-4-amino-4-deoxy-L-arabinose--oxoglutarate aminotransferase (382 aa).

K183 bears the N6-(pyridoxal phosphate)lysine mark.

This sequence belongs to the DegT/DnrJ/EryC1 family. ArnB subfamily. In terms of assembly, homodimer. It depends on pyridoxal 5'-phosphate as a cofactor.

The enzyme catalyses UDP-4-amino-4-deoxy-beta-L-arabinose + 2-oxoglutarate = UDP-beta-L-threo-pentopyranos-4-ulose + L-glutamate. It participates in nucleotide-sugar biosynthesis; UDP-4-deoxy-4-formamido-beta-L-arabinose biosynthesis; UDP-4-deoxy-4-formamido-beta-L-arabinose from UDP-alpha-D-glucuronate: step 2/3. Its pathway is bacterial outer membrane biogenesis; lipopolysaccharide biosynthesis. Catalyzes the conversion of UDP-4-keto-arabinose (UDP-Ara4O) to UDP-4-amino-4-deoxy-L-arabinose (UDP-L-Ara4N). The modified arabinose is attached to lipid A and is required for resistance to polymyxin and cationic antimicrobial peptides. This is UDP-4-amino-4-deoxy-L-arabinose--oxoglutarate aminotransferase from Pseudomonas syringae pv. syringae (strain B728a).